We begin with the raw amino-acid sequence, 54 residues long: MARNDIRPIIKLKSTAGTGYTYVTRKNKRNNPDRITLKKFDPVIRKHVEFREER.

It belongs to the bacterial ribosomal protein bL33 family.

The protein is Large ribosomal subunit protein bL33 of Corynebacterium efficiens (strain DSM 44549 / YS-314 / AJ 12310 / JCM 11189 / NBRC 100395).